Consider the following 161-residue polypeptide: Allophycocyanin alpha-B chain (161 aa).

N4-methylasparagine is present on Asn-71. Cys-81 is a (2R,3E)-phycocyanobilin binding site.

It belongs to the phycobiliprotein family. Contains one covalently linked bilin chromophore.

Its subcellular location is the plastid. The protein resides in the chloroplast thylakoid membrane. Functionally, allophycocyanin is a photosynthetic bile pigment-protein complex with maximum absorption at approximately 650 nanometers. This is Allophycocyanin alpha-B chain (apcD) from Porphyra purpurea (Red seaweed).